Consider the following 501-residue polypeptide: Dipeptide and tripeptide permease A (501 aa).

At 1–21 the chain is on the cytoplasmic side; that stretch reads MSTANKKPTESVSLNAFKQPK. Residues 22–44 form a helical membrane-spanning segment; that stretch reads AFYLIFSIELWERFGYYGLQGIM. Over 45–59 the chain is Periplasmic; it reads AVYLVKQLGMSEADS. A helical membrane pass occupies residues 60-80; that stretch reads ITLFSSFSALVYGLVAIGGWL. The Cytoplasmic portion of the chain corresponds to 81–89; the sequence is GDKILGTKR. A helical membrane pass occupies residues 90–110; it reads VIMLGAVVLAIGYALVAWSGH. Residue D111 is a topological domain, periplasmic. The helical transmembrane segment at 112-132 threads the bilayer; the sequence is AGIVYMGMAAIAVGNGLFKAN. Over 133-153 the chain is Cytoplasmic; sequence PSSLLSTCYAKDDPRLDGAFT. Residues 154 to 174 form a helical membrane-spanning segment; sequence MYYMSVNIGSFFSMLATPWLA. At 175–178 the chain is on the periplasmic side; that stretch reads ARYG. Residues 179-199 traverse the membrane as a helical segment; it reads WSTAFALSVVGMLITVVNFAF. At 200-219 the chain is on the cytoplasmic side; it reads CQRWVKSYGSKPDFEPINFR. The chain crosses the membrane as a helical span at residues 220–240; that stretch reads NLLLTIVGIVVLIAVATWLLH. Residues 241–246 lie on the Periplasmic side of the membrane; sequence NQDIAR. The helical transmembrane segment at 247 to 267 threads the bilayer; the sequence is MVLGVIALGIVIIFGKEAFSM. Over 268 to 274 the chain is Cytoplasmic; it reads HGAARRK. A helical transmembrane segment spans residues 275-295; it reads MIVAFILMLQAIIFFVLYSQM. The Periplasmic portion of the chain corresponds to 296-320; sequence PTSLNFFAIRNVEHSILGIAFEPEQ. The helical transmembrane segment at 321–341 threads the bilayer; that stretch reads YQALNPFWIIIGSPILAAIYN. Over 342–352 the chain is Cytoplasmic; sequence RMGDTLPMPMK. A helical transmembrane segment spans residues 353-373; the sequence is FAIGMVLCSGAFLILPLGAKF. Residues 374–383 are Periplasmic-facing; sequence ANDAGIVSVN. The helical transmembrane segment at 384-404 threads the bilayer; that stretch reads WLIASYGLQSIGELMISGLGL. Over 405–414 the chain is Cytoplasmic; sequence AMVAQLVPQR. A helical membrane pass occupies residues 415 to 435; the sequence is LMGFIMGSWFLTTAGANIIGG. Residues 436–459 lie on the Periplasmic side of the membrane; the sequence is YVANLMAVPSDVTDPLMSLEVYGR. The chain crosses the membrane as a helical span at residues 460 to 480; sequence VFMQIGIATAVIAVLMLLTAP. Residues 481–501 are Cytoplasmic-facing; that stretch reads KLNRMTQDDDTAEKGSKAATV.

Belongs to the major facilitator superfamily. Proton-dependent oligopeptide transporter (POT/PTR) (TC 2.A.17) family. DtpA subfamily.

It localises to the cell inner membrane. In terms of biological role, proton-dependent permease that transports di- and tripeptides. This is Dipeptide and tripeptide permease A from Salmonella typhimurium (strain LT2 / SGSC1412 / ATCC 700720).